Reading from the N-terminus, the 304-residue chain is UDP-N-acetylenolpyruvoylglucosamine reductase (304 aa).

Residues 33–198 (KVGGPVDILL…LEVTFNLEKG (166 aa)) form the FAD-binding PCMH-type domain. The active site involves Arg-177. Catalysis depends on Ser-227, which acts as the Proton donor. Glu-297 is an active-site residue.

The protein belongs to the MurB family. FAD is required as a cofactor.

Its subcellular location is the cytoplasm. It carries out the reaction UDP-N-acetyl-alpha-D-muramate + NADP(+) = UDP-N-acetyl-3-O-(1-carboxyvinyl)-alpha-D-glucosamine + NADPH + H(+). Its pathway is cell wall biogenesis; peptidoglycan biosynthesis. Its function is as follows. Cell wall formation. The protein is UDP-N-acetylenolpyruvoylglucosamine reductase of Clostridium kluyveri (strain NBRC 12016).